The chain runs to 174 residues: 3-hydroxydecanoyl-[acyl-carrier-protein] dehydratase (174 aa).

The active site involves histidine 71.

Belongs to the thioester dehydratase family. FabA subfamily. As to quaternary structure, homodimer.

The protein resides in the cytoplasm. The enzyme catalyses a (3R)-hydroxyacyl-[ACP] = a (2E)-enoyl-[ACP] + H2O. The catalysed reaction is (3R)-hydroxydecanoyl-[ACP] = (2E)-decenoyl-[ACP] + H2O. It catalyses the reaction (2E)-decenoyl-[ACP] = (3Z)-decenoyl-[ACP]. It functions in the pathway lipid metabolism; fatty acid biosynthesis. Necessary for the introduction of cis unsaturation into fatty acids. Catalyzes the dehydration of (3R)-3-hydroxydecanoyl-ACP to E-(2)-decenoyl-ACP and then its isomerization to Z-(3)-decenoyl-ACP. Can catalyze the dehydratase reaction for beta-hydroxyacyl-ACPs with saturated chain lengths up to 16:0, being most active on intermediate chain length. In Nitrobacter winogradskyi (strain ATCC 25391 / DSM 10237 / CIP 104748 / NCIMB 11846 / Nb-255), this protein is 3-hydroxydecanoyl-[acyl-carrier-protein] dehydratase.